The primary structure comprises 612 residues: DNA mismatch repair protein MutL (612 aa).

It belongs to the DNA mismatch repair MutL/HexB family.

Its function is as follows. This protein is involved in the repair of mismatches in DNA. It is required for dam-dependent methyl-directed DNA mismatch repair. May act as a 'molecular matchmaker', a protein that promotes the formation of a stable complex between two or more DNA-binding proteins in an ATP-dependent manner without itself being part of a final effector complex. The polypeptide is DNA mismatch repair protein MutL (Bartonella quintana (strain Toulouse) (Rochalimaea quintana)).